Here is a 176-residue protein sequence, read N- to C-terminus: NRGPAYGLSAEVKNKLAQKYDPQTERQLRVWIEGATGRRIGDNFXDGLKDGVILMELINKLQPGSVQKVNDPVQNWHKLENIGNFLRAIKHYGVKPHDIFEANDLFENTNHTQVQSTLIALASQAKTKGNNVGLGVKYAEKQQRRFQPEKLREGRNIIGLQMGTNKFASQQGMTAY.

The Calponin-homology (CH) domain occupies 22–125; the sequence is PQTERQLRVW…STLIALASQA (104 aa). A Calponin-like repeat occupies 158–176; the sequence is IGLQMGTNKFASQQGMTAY. Thr164 is subject to Phosphothreonine; by ROCK2. Residue Ser169 is modified to Phosphoserine; by ROCK2. Thr174 bears the Phosphothreonine; by ROCK2 mark.

Belongs to the calponin family. Smooth muscle, and tissues containing significant amounts of smooth muscle.

Thin filament-associated protein that is implicated in the regulation and modulation of smooth muscle contraction. It is capable of binding to actin, calmodulin and tropomyosin. The interaction of calponin with actin inhibits the actomyosin Mg-ATPase activity. The sequence is that of Calponin-1 (CNN1) from Meleagris gallopavo (Wild turkey).